The sequence spans 389 residues: Probable nitrate transporter NarT (389 aa).

The next 12 helical transmembrane spans lie at 14-34, 45-65, 69-89, 97-117, 139-159, 161-181, 211-231, 246-266, 268-288, 294-314, 331-351, and 353-373; these read TLSLVVGFMAWSIIAPLMPFI, ISIILAIPVILGSVLRVPFGY, IVGAKWVFFTSFIVLLFPIFF, GMLMASGFFLGVGGAIFSVGV, GNIGTAVSSFLAPPIAGIIGW, TTVRSYLIIIALFALIMFIFG, WYFITFGAFVAFGIFLPNYLV, GVFIALATFLRPIGGILGDKF, AVKVLMIDFVVMIIGAIILGI, LFTVGCLTISICAGIGNGLIF, IVSMMGGLGGFFPPLVITYVA, and LTGSSHLAFIFLAVFGCIALF.

Belongs to the major facilitator superfamily. Nitrate/nitrite porter (TC 2.A.1.8) family.

The protein resides in the cell membrane. Its function is as follows. Probably required for nitrate uptake under anoxic conditions. Also possibly involved in excretion of nitrite produced by the dissimilatory reduction of nitrate. This chain is Probable nitrate transporter NarT (narT), found in Staphylococcus aureus (strain bovine RF122 / ET3-1).